We begin with the raw amino-acid sequence, 408 residues long: MSWDQVWIDINIATMSPNISEPYGAIRDAALAVKDGKIAWIGKRCDLPEFDVLATPIYKGKNGWLTPGLIDAHTHLVFAGNRANEFELRLQGASYEEIARNGGGIISTVNACREADEAELFELGRQRLNALAKEGVTTVEIKSGYGLDIETELKILRVARELGKHHHVDVKTTFLGAHAIPPEYKNDSDAYVDLVINEMLPQVIAENLADAVDVFCENIAFSLAQTERVLTAAKNAGLDIKLHAEQLSNLGGSEMAAKLGAKSVDHIEYLDEDGVKALSESGTCATLLPGAFYFLRETQLPPIELLRQYKVPMVVASDYNPGSSPLCSSLLMLNMACTLMRLTPEEALAGMTRNAAKALGIEAEVGVLETGMTADFCLWNISTPAELSYTYGVGSCIEVVKNGRLVHQ.

Residues His73 and His75 each contribute to the Fe(3+) site. Zn(2+)-binding residues include His73 and His75. 4-imidazolone-5-propanoate contacts are provided by Arg82, Tyr145, and His178. Tyr145 provides a ligand contact to N-formimidoyl-L-glutamate. His243 provides a ligand contact to Fe(3+). His243 is a binding site for Zn(2+). Residue Gln246 participates in 4-imidazolone-5-propanoate binding. Asp318 is a Fe(3+) binding site. Asp318 contributes to the Zn(2+) binding site. Positions 320 and 322 each coordinate N-formimidoyl-L-glutamate. A 4-imidazolone-5-propanoate-binding site is contributed by Ser323.

It belongs to the metallo-dependent hydrolases superfamily. HutI family. Zn(2+) serves as cofactor. Requires Fe(3+) as cofactor.

The protein resides in the cytoplasm. The catalysed reaction is 4-imidazolone-5-propanoate + H2O = N-formimidoyl-L-glutamate. The protein operates within amino-acid degradation; L-histidine degradation into L-glutamate; N-formimidoyl-L-glutamate from L-histidine: step 3/3. Its function is as follows. Catalyzes the hydrolytic cleavage of the carbon-nitrogen bond in imidazolone-5-propanoate to yield N-formimidoyl-L-glutamate. It is the third step in the universal histidine degradation pathway. This is Imidazolonepropionase from Shewanella piezotolerans (strain WP3 / JCM 13877).